The sequence spans 188 residues: Elongation factor P (188 aa).

The protein belongs to the elongation factor P family.

The protein localises to the cytoplasm. It participates in protein biosynthesis; polypeptide chain elongation. In terms of biological role, involved in peptide bond synthesis. Stimulates efficient translation and peptide-bond synthesis on native or reconstituted 70S ribosomes in vitro. Probably functions indirectly by altering the affinity of the ribosome for aminoacyl-tRNA, thus increasing their reactivity as acceptors for peptidyl transferase. This is Elongation factor P from Gluconobacter oxydans (strain 621H) (Gluconobacter suboxydans).